The chain runs to 137 residues: Global transcriptional regulator Spx (137 aa).

Cys10 and Cys13 are disulfide-bonded.

It belongs to the ArsC family. Spx subfamily. In terms of assembly, interacts with the C-terminal domain of the alpha subunit of the RNAP.

It localises to the cytoplasm. Global transcriptional regulator that plays a key role in stress response and exerts either positive or negative regulation of genes. Acts by interacting with the C-terminal domain of the alpha subunit of the RNA polymerase (RNAP). This interaction can enhance binding of RNAP to the promoter region of target genes and stimulate their transcription, or block interaction of RNAP with activator. This Streptococcus mutans serotype c (strain ATCC 700610 / UA159) protein is Global transcriptional regulator Spx.